A 1133-amino-acid chain; its full sequence is MTQLAVPSPAAPTLPDLVEIQRESFLWFLREGFEEELLSFSPIVDYTGKLELHFLPEYRPGDPSKGYKINKPRYDPEEAKRRDATYQAQIRVPTRLINKETGEIKDMDVFIGELPLMTDRGTFIINGAERVIVNQIVRSPGVYYKSELDKNGRRTYSASLIPNRGAWLKFETDKNGLVWVRIDKTRKLSAAVLLKALGLSDSEIYDSLRHPEFFQKTMEKEGHYSEEEALMELYRKLRPGEPPTVSGGQQLLESRFFDPKRYDLGRVGRYKLNKKLNLNVAENVRVLTVTDILAVIDYLINLEYDIGHVDDIDHLGNRRVRSVGELLQNQVRVGLNRLERIIRERMTVSESENLTPASLVNPKPLVAAIKEFFGSSQLSQFMDQTNPLAELTHKRRLSALGPGGLSRERAGFAVRDIHPSHYGRICPIETPEGPNAGLIGSLATHARVNQYGFIESPYYRVENGVVRKDLGMVYLTADEEDEYRVAPGDVPVDAEGRITADLVPVRYRQEFTTAHPSEVHYVQVSPVQLISVATSLIPFLEHDDANRALMGANMQRQAVPLLKPDRPYVGTGLEAQAARDSGMVVVSRTSGVVTYVSADEIVVRPDDGGDPIVYRLQKYQRSNQDTCLNQRPLVYAGDRVVPGQVLADGPATEGGELALGQNVLVAYMPWEGYNYEDAILISERLVYDDVFTSVHIEKYEIEARQTKLGPEEITREIPNVGEDALRNLDENGIVRIGAWVEAGDILVGKVTPKGESDQPPEERLLRAIFGEKARDVRDNSLRVPNGERGRVVDVRIFTREQGDELPPGANMVVRVYIALKRKIQVGDKIAGRHGNKGIISRILPIEDMPYLADGTPVDVVLNPLGVPSRMNVGQVYECLLGWAAEHLGVRFKLMPFDEMHGLEASRLTVEAKLREAREKTGKDWIFNPEGKYCGKIQVFDGRTGEPFDQPVTVGRAYMLKLVHLVDDKIHARSTGPYSLVTQQPLGGKAQQGGQRFGEMEVWALEAFGAAYILQELLTVKSDDMVGRNEALNAIVKGKPIPRPGTPESFKVLVRELQSLCLDVSVHKVEVDSDGQTRDVEVDLMADVSSRHTPSRPTYESVTSEDLSPAAGGTFTLARRSREEDEDREEEDDF.

The disordered stretch occupies residues 1085 to 1133 (ADVSSRHTPSRPTYESVTSEDLSPAAGGTFTLARRSREEDEDREEEDDF). The span at 1090-1105 (RHTPSRPTYESVTSED) shows a compositional bias: polar residues. The span at 1123–1133 (EDEDREEEDDF) shows a compositional bias: acidic residues.

Belongs to the RNA polymerase beta chain family. As to quaternary structure, in cyanobacteria the RNAP catalytic core is composed of 2 alpha, 1 beta, 1 beta', 1 gamma and 1 omega subunit. When a sigma factor is associated with the core the holoenzyme is formed, which can initiate transcription.

It carries out the reaction RNA(n) + a ribonucleoside 5'-triphosphate = RNA(n+1) + diphosphate. In terms of biological role, DNA-dependent RNA polymerase catalyzes the transcription of DNA into RNA using the four ribonucleoside triphosphates as substrates. In Synechococcus sp. (strain JA-3-3Ab) (Cyanobacteria bacterium Yellowstone A-Prime), this protein is DNA-directed RNA polymerase subunit beta.